We begin with the raw amino-acid sequence, 491 residues long: Glucose-6-phosphate exchanger SLC37A2 (491 aa).

A helical transmembrane segment spans residues 5–25 (LAPGIWYRAFILLITFLIYTC). Residues Asn43, Asn52, and Asn58 are each glycosylated (N-linked (GlcNAc...) asparagine). The next 5 helical transmembrane spans lie at 78-98 (GAVD…SGIF), 108-130 (LTAG…FWNI), 132-154 (VLWY…WPAV), 169-189 (LIMG…SLLA), and 200-220 (SFVV…FFLI). The segment at 229–257 (SPPQHHGNPEESQDQPEDPANGPSCNKES) is disordered. 6 helical membrane passes run 292 to 312 (LCLL…PLYI), 328 to 348 (TLFD…SDYI), 352 to 372 (ATTC…YNHV), 377 to 397 (IGIS…PYAL), 424 to 444 (AIID…AGLI), and 452 to 472 (VFYM…RLVY).

This sequence belongs to the major facilitator superfamily. Organophosphate:Pi antiporter (OPA) (TC 2.A.1.4) family.

It is found in the endoplasmic reticulum membrane. The enzyme catalyses D-glucose 6-phosphate(in) + phosphate(out) = D-glucose 6-phosphate(out) + phosphate(in). Its activity is regulated as follows. Inhibited by vanadate but not by chlorogenic acid. Its function is as follows. Inorganic phosphate and glucose-6-phosphate antiporter. May transport cytoplasmic glucose-6-phosphate into the lumen of the endoplasmic reticulum and translocate inorganic phosphate into the opposite direction. Independent of a lumenal glucose-6-phosphatase. May not play a role in homeostatic regulation of blood glucose levels. This is Glucose-6-phosphate exchanger SLC37A2 from Bos taurus (Bovine).